Consider the following 386-residue polypeptide: L-arabinitol 4-dehydrogenase (386 aa).

C55, H80, E81, C110, C113, C116, C124, and E165 together coordinate Zn(2+). Residues 192 to 193 (PI), D213, R218, I293, and 317 to 319 (QYR) each bind NAD(+).

Belongs to the zinc-containing alcohol dehydrogenase family. As to quaternary structure, homotetramer. The cofactor is Zn(2+).

It catalyses the reaction L-arabinitol + NAD(+) = L-xylulose + NADH + H(+). Its pathway is carbohydrate degradation; L-arabinose degradation via L-arabinitol; D-xylulose 5-phosphate from L-arabinose (fungal route): step 2/5. Catalyzes the NAD-dependent oxidation of L-arabinitol to L-xylulose in the fungal L-arabinose catabolic pathway. L-arabinose catabolism is important for using plant material as a carbon source. Not active with NADP as cosubstrate. This is L-arabinitol 4-dehydrogenase (ladA) from Aspergillus niger (strain ATCC MYA-4892 / CBS 513.88 / FGSC A1513).